We begin with the raw amino-acid sequence, 240 residues long: 2,3,4,5-tetrahydropyridine-2,6-dicarboxylate N-acetyltransferase (240 aa).

The protein belongs to the transferase hexapeptide repeat family. DapH subfamily.

The catalysed reaction is (S)-2,3,4,5-tetrahydrodipicolinate + acetyl-CoA + H2O = L-2-acetamido-6-oxoheptanedioate + CoA. It participates in amino-acid biosynthesis; L-lysine biosynthesis via DAP pathway; LL-2,6-diaminopimelate from (S)-tetrahydrodipicolinate (acetylase route): step 1/3. Functionally, catalyzes the transfer of an acetyl group from acetyl-CoA to tetrahydrodipicolinate. The protein is 2,3,4,5-tetrahydropyridine-2,6-dicarboxylate N-acetyltransferase of Bacillus cytotoxicus (strain DSM 22905 / CIP 110041 / 391-98 / NVH 391-98).